The following is a 219-amino-acid chain: Elongation factor Ts, chloroplastic (219 aa).

It belongs to the EF-Ts family.

The protein localises to the plastid. It localises to the chloroplast. Functionally, associates with the EF-Tu.GDP complex and induces the exchange of GDP to GTP. It remains bound to the aminoacyl-tRNA.EF-Tu.GTP complex up to the GTP hydrolysis stage on the ribosome. The polypeptide is Elongation factor Ts, chloroplastic (tsf) (Guillardia theta (Cryptophyte)).